The primary structure comprises 59 residues: Large ribosomal subunit protein bL32 (59 aa).

The interval 35–59 is disordered; that stretch reads EAHLRHHISPNGYYRGRKVVKTKND. Residues 49-59 show a composition bias toward basic residues; the sequence is RGRKVVKTKND.

It belongs to the bacterial ribosomal protein bL32 family.

The polypeptide is Large ribosomal subunit protein bL32 (Polynucleobacter asymbioticus (strain DSM 18221 / CIP 109841 / QLW-P1DMWA-1) (Polynucleobacter necessarius subsp. asymbioticus)).